The chain runs to 296 residues: 4-hydroxy-tetrahydrodipicolinate synthase (296 aa).

A pyruvate-binding site is contributed by threonine 49. Residue tyrosine 137 is the Proton donor/acceptor of the active site. Lysine 165 acts as the Schiff-base intermediate with substrate in catalysis. A pyruvate-binding site is contributed by valine 207.

Belongs to the DapA family. In terms of assembly, homotetramer; dimer of dimers.

The protein localises to the cytoplasm. The catalysed reaction is L-aspartate 4-semialdehyde + pyruvate = (2S,4S)-4-hydroxy-2,3,4,5-tetrahydrodipicolinate + H2O + H(+). Its pathway is amino-acid biosynthesis; L-lysine biosynthesis via DAP pathway; (S)-tetrahydrodipicolinate from L-aspartate: step 3/4. Its function is as follows. Catalyzes the condensation of (S)-aspartate-beta-semialdehyde [(S)-ASA] and pyruvate to 4-hydroxy-tetrahydrodipicolinate (HTPA). This chain is 4-hydroxy-tetrahydrodipicolinate synthase, found in Nitrobacter hamburgensis (strain DSM 10229 / NCIMB 13809 / X14).